The sequence spans 286 residues: MLILETVPLLRREVRRWRQEGKRIALVPTMGNLHDGHMALVNEAHARADVVIVSVFVNPMQFDRPDDLARYPRTLQEDCEQLNRHGVDLVFAPAAEEIYPQGVSQQTYVDVPALSSILEGASRPGHFRGVATIVSKLFNLVQPDLACFGEKDYQQLQLIRKLVADMGYGTEIVGVPIVRGEDGLALSSRNGYLDSDERRLAPRLYNIMMQLASQLENGERDLEALLEQTASRLRQAGFCPDELFIRDADTLGDVNVDTRTAIVLMAAWLGQARLIDNVRIAFNADA.

30–37 (MGNLHDGH) provides a ligand contact to ATP. Histidine 37 functions as the Proton donor in the catalytic mechanism. Glutamine 61 contributes to the (R)-pantoate binding site. Residue glutamine 61 coordinates beta-alanine. ATP is bound at residue 149–152 (GEKD). Glutamine 155 is a (R)-pantoate binding site. ATP is bound by residues valine 178 and 186 to 189 (LSSR).

Belongs to the pantothenate synthetase family. In terms of assembly, homodimer.

Its subcellular location is the cytoplasm. The enzyme catalyses (R)-pantoate + beta-alanine + ATP = (R)-pantothenate + AMP + diphosphate + H(+). Its pathway is cofactor biosynthesis; (R)-pantothenate biosynthesis; (R)-pantothenate from (R)-pantoate and beta-alanine: step 1/1. Functionally, catalyzes the condensation of pantoate with beta-alanine in an ATP-dependent reaction via a pantoyl-adenylate intermediate. The polypeptide is Pantothenate synthetase (Edwardsiella ictaluri (strain 93-146)).